A 374-amino-acid chain; its full sequence is MSKGIVLLAAGGTGGHVFPAEALAFKLKERGYSVHLVTDSRAERYAGKFPAEEIHVVPSATIGSKNPVAVARSLWTLWSGMRAAKKLIQRLKPVIVVGFGGYPTVPPLLAATRLGVPTMIHEQNAVMGRANKALATRVQGIAGGFLPEGGGAFPEKTVTTGNPVRPAIIAAAEVPYTPSHPGEAFNLVVFGGSQGAQYFSKALPTAISLLDDALRLRLRITQQVRPEDMEMVGGCVAKLEMGADIAPFFTDMAERLAKAHLVICRSGASTVSEISVIGRPAVLVPYPHALDHDQAANAAALAATGGAKVIAQSELSPEKIAAILTAVMNDPEKLSHMAAAAKLAGKPDAANLLADMVEAIAAGRTIAELKRTRA.

UDP-N-acetyl-alpha-D-glucosamine-binding positions include 13 to 15 (TGG), asparagine 124, arginine 165, serine 193, and glutamine 294.

This sequence belongs to the glycosyltransferase 28 family. MurG subfamily.

It is found in the cell inner membrane. It carries out the reaction di-trans,octa-cis-undecaprenyl diphospho-N-acetyl-alpha-D-muramoyl-L-alanyl-D-glutamyl-meso-2,6-diaminopimeloyl-D-alanyl-D-alanine + UDP-N-acetyl-alpha-D-glucosamine = di-trans,octa-cis-undecaprenyl diphospho-[N-acetyl-alpha-D-glucosaminyl-(1-&gt;4)]-N-acetyl-alpha-D-muramoyl-L-alanyl-D-glutamyl-meso-2,6-diaminopimeloyl-D-alanyl-D-alanine + UDP + H(+). It functions in the pathway cell wall biogenesis; peptidoglycan biosynthesis. Functionally, cell wall formation. Catalyzes the transfer of a GlcNAc subunit on undecaprenyl-pyrophosphoryl-MurNAc-pentapeptide (lipid intermediate I) to form undecaprenyl-pyrophosphoryl-MurNAc-(pentapeptide)GlcNAc (lipid intermediate II). In Rhizobium leguminosarum bv. trifolii (strain WSM2304), this protein is UDP-N-acetylglucosamine--N-acetylmuramyl-(pentapeptide) pyrophosphoryl-undecaprenol N-acetylglucosamine transferase.